Consider the following 271-residue polypeptide: Tryptophan synthase alpha chain (271 aa).

Residues Glu49 and Asp60 each act as proton acceptor in the active site.

The protein belongs to the TrpA family. In terms of assembly, tetramer of two alpha and two beta chains.

The enzyme catalyses (1S,2R)-1-C-(indol-3-yl)glycerol 3-phosphate + L-serine = D-glyceraldehyde 3-phosphate + L-tryptophan + H2O. The protein operates within amino-acid biosynthesis; L-tryptophan biosynthesis; L-tryptophan from chorismate: step 5/5. The alpha subunit is responsible for the aldol cleavage of indoleglycerol phosphate to indole and glyceraldehyde 3-phosphate. The polypeptide is Tryptophan synthase alpha chain (Burkholderia pseudomallei (strain K96243)).